The primary structure comprises 260 residues: uncharacterized protein (260 aa).

The N-terminal stretch at 1 to 22 (MGYLKRFALYISILVLIVMVAG) is a signal peptide. C23 carries N-palmitoyl cysteine lipidation. C23 is lipidated: S-diacylglycerol cysteine.

This sequence belongs to the staphylococcal tandem lipoprotein family.

It is found in the cell membrane. This is an uncharacterized protein from Staphylococcus aureus (strain bovine RF122 / ET3-1).